A 342-amino-acid polypeptide reads, in one-letter code: N-acetyl-gamma-glutamyl-phosphate reductase (342 aa).

The active site involves C147.

It belongs to the NAGSA dehydrogenase family. Type 1 subfamily.

It is found in the cytoplasm. It carries out the reaction N-acetyl-L-glutamate 5-semialdehyde + phosphate + NADP(+) = N-acetyl-L-glutamyl 5-phosphate + NADPH + H(+). It participates in amino-acid biosynthesis; L-arginine biosynthesis; N(2)-acetyl-L-ornithine from L-glutamate: step 3/4. In terms of biological role, catalyzes the NADPH-dependent reduction of N-acetyl-5-glutamyl phosphate to yield N-acetyl-L-glutamate 5-semialdehyde. This Campylobacter jejuni (strain RM1221) protein is N-acetyl-gamma-glutamyl-phosphate reductase.